Here is a 382-residue protein sequence, read N- to C-terminus: Histidinol-phosphate aminotransferase (382 aa).

Residues 1–28 (MTSAPRPRPTLDDLPLREDLRGKSPYGA) form a disordered region. The span at 9 to 22 (PTLDDLPLREDLRG) shows a compositional bias: basic and acidic residues. An N6-(pyridoxal phosphate)lysine modification is found at Lys-233.

This sequence belongs to the class-II pyridoxal-phosphate-dependent aminotransferase family. Histidinol-phosphate aminotransferase subfamily. Homodimer. The cofactor is pyridoxal 5'-phosphate.

The enzyme catalyses L-histidinol phosphate + 2-oxoglutarate = 3-(imidazol-4-yl)-2-oxopropyl phosphate + L-glutamate. It functions in the pathway amino-acid biosynthesis; L-histidine biosynthesis; L-histidine from 5-phospho-alpha-D-ribose 1-diphosphate: step 7/9. This Mycobacterium marinum (strain ATCC BAA-535 / M) protein is Histidinol-phosphate aminotransferase.